Consider the following 1048-residue polypeptide: Probable inactive receptor kinase At5g10020 (1048 aa).

The signal sequence occupies residues 1-21; the sequence is MSHFLTFCFLSLLLLLHGANA. LRR repeat units follow at residues 100–120, 124–146, 148–169, 172–194, 196–217, 224–246, 250–272, 273–294, 298–319, 320–342, 365–387, 389–411, 412–433, 436–457, 469–491, 493–516, 517–539, and 540–560; these read RLRNLSLSGNSFSGRVVPSLG, SLQHLDLSDNGFYGPIPGRISEL, SLNHLNLSSNKFEGGFPSGFRN, QLRSLDLHKNEIWGDVGEIFTEL, NVEFVDLSCNRFNGGLSLPMEN, TLRHLNLSHNALNGKFFSEESIG, NLEIVDLENNQINGELPHFGSQP, SLRILKLARNELFGLVPQELLQ, PLLELDLSRNGFTGSISEINSS, TLTMLNLSSNGLSGDLPSSFKSC, TPDVLDLSSNNLSGSLPNFTSAF, RLSVLSIRNNSVSGSLPSLWGDS, QFSVIDLSSNKFSGFIPVSFFT, SLRSLNLSRNNLEGPIPFRGSR, QMELLDLSTNSLTGMLPGDIGTM, KIKVLNLANNKLSGELPSDLNKLS, GLLFLDLSNNTFKGQIPNKLPSQ, and MVGFNVSYNDLSGIIPEDLRS. Residues 602-622 form a helical membrane-spanning segment; that stretch reads IAIIVASVGAAIMILFVLFAY. The disordered stretch occupies residues 696 to 733; it reads EQGAPATSAPTNLLDDYPAASGRKSSSGGSPLSSSPRF. Residues 716–733 are compositionally biased toward low complexity; it reads SGRKSSSGGSPLSSSPRF. S744 bears the Phosphoserine mark. The Protein kinase domain maps to 768 to 1045; that stretch reads RAPAEVLGRS…IRQVLDHLTS (278 aa). Residues 774–782 and K796 contribute to the ATP site; that span reads LGRSSHGTL.

This sequence belongs to the protein kinase superfamily.

The protein resides in the membrane. The chain is Probable inactive receptor kinase At5g10020 from Arabidopsis thaliana (Mouse-ear cress).